Consider the following 940-residue polypeptide: Translation initiation factor IF-2 (940 aa).

Disordered stretches follow at residues 48-264 and 278-351; these read ESFG…VESK and QVAE…TERK. 5 stretches are compositionally biased toward basic and acidic residues: residues 65-95, 112-125, 155-206, 232-258, and 292-301; these read SKPE…KEEV, FKAE…EQAA, NNER…REAA, RTSE…KFEE, and ARPDKKRDFN. Residues 314–332 show a composition bias toward low complexity; the sequence is NRNSQNQVRNQRTSNWNNN. In terms of domain architecture, tr-type G spans 442–609; sequence ERPPVVTIMG…TVLLVAEIQE (168 aa). Residues 451-458 are G1; sequence GHVDHGKT. 451–458 serves as a coordination point for GTP; it reads GHVDHGKT. A G2 region spans residues 476-480; it reads GITQH. The G3 stretch occupies residues 497–500; sequence DTPG. GTP is bound by residues 497–501 and 551–554; these read DTPGH and NKID. Residues 551–554 are G4; the sequence is NKID. The segment at 587–589 is G5; it reads SAK.

This sequence belongs to the TRAFAC class translation factor GTPase superfamily. Classic translation factor GTPase family. IF-2 subfamily.

It localises to the cytoplasm. One of the essential components for the initiation of protein synthesis. Protects formylmethionyl-tRNA from spontaneous hydrolysis and promotes its binding to the 30S ribosomal subunits. Also involved in the hydrolysis of GTP during the formation of the 70S ribosomal complex. This chain is Translation initiation factor IF-2, found in Streptococcus suis (strain 98HAH33).